Here is a 510-residue protein sequence, read N- to C-terminus: D-alanine--D-alanyl carrier protein ligase (510 aa).

ATP is bound at residue 157–158 (TS). D202 lines the D-alanine pocket. 297-302 (NTYGPT) contributes to the ATP binding site. V306 is a binding site for D-alanine. The ATP site is built by D389 and K498. K498 is a binding site for D-alanine.

The protein belongs to the ATP-dependent AMP-binding enzyme family. DltA subfamily.

Its subcellular location is the cytoplasm. The catalysed reaction is holo-[D-alanyl-carrier protein] + D-alanine + ATP = D-alanyl-[D-alanyl-carrier protein] + AMP + diphosphate. It functions in the pathway cell wall biogenesis; lipoteichoic acid biosynthesis. In terms of biological role, catalyzes the first step in the D-alanylation of lipoteichoic acid (LTA), the activation of D-alanine and its transfer onto the D-alanyl carrier protein (Dcp) DltC. In an ATP-dependent two-step reaction, forms a high energy D-alanyl-AMP intermediate, followed by transfer of the D-alanyl residue as a thiol ester to the phosphopantheinyl prosthetic group of the Dcp. D-alanylation of LTA plays an important role in modulating the properties of the cell wall in Gram-positive bacteria, influencing the net charge of the cell wall. In Listeria monocytogenes serovar 1/2a (strain ATCC BAA-679 / EGD-e), this protein is D-alanine--D-alanyl carrier protein ligase.